Here is a 434-residue protein sequence, read N- to C-terminus: MESKPFSLPSQSATVLIGTQFGDEGKGKLVDYLSDQYDIVVRYQGGANAGHTICFDGKSVVLHLIPSGIFNEKCVCVIGNGVVIDPVALLEEIATVEALGYEVKGRLFISHNAHLIMPYHKRLDSLSESAQGDQKIGTTGRGIGPSYEDKFARKGIRVVDLLNAEVLQEKLRENLAQKNRLFTTIYDGEEIDVESMVREYEEFDKIIDPYITNTQLYLNRQLREGRTVLLEGAQGSLLDVDHGTYPFVTSSNPTSGGACTGSGIAPNHIGKVIGVCKAYMTRVGNGAFPTELFDETGEELGRVGHEFGATTGRKRRCGWIDLVAMRYAVAVNGITELALTKLDVLDGFEEIQVCNSYTLDGKEIFDFPTDHETLSRVKPVLTPMKGWMASNADARNFEEMRPAAKQFVEFLENELEVPVTFISVGPGRNETVFR.

Residues Gly22–Lys28 and Gly50–Thr52 each bind GTP. The active-site Proton acceptor is the Asp23. Residues Asp23 and Gly50 each coordinate Mg(2+). Residues Asp23–Lys26, Asn48–His51, Thr139, Arg153, Gln234, Thr249, and Arg313 contribute to the IMP site. Residue His51 is the Proton donor of the active site. Ala309–Arg315 lines the substrate pocket. GTP contacts are provided by residues Arg315, Lys341 to Asp343, and Ser423 to Gly425.

Belongs to the adenylosuccinate synthetase family. Homodimer. The cofactor is Mg(2+).

The protein localises to the cytoplasm. It catalyses the reaction IMP + L-aspartate + GTP = N(6)-(1,2-dicarboxyethyl)-AMP + GDP + phosphate + 2 H(+). It functions in the pathway purine metabolism; AMP biosynthesis via de novo pathway; AMP from IMP: step 1/2. In terms of biological role, plays an important role in the de novo pathway of purine nucleotide biosynthesis. Catalyzes the first committed step in the biosynthesis of AMP from IMP. The chain is Adenylosuccinate synthetase from Chlorobium phaeovibrioides (strain DSM 265 / 1930) (Prosthecochloris vibrioformis (strain DSM 265)).